The chain runs to 148 residues: Globin-3 (148 aa).

Residues 2 to 148 (TLTKHEQDIL…HVFPMMAAEI (147 aa)) enclose the Globin domain. H99 provides a ligand contact to heme.

Belongs to the globin family. Monomer.

Functionally, oxygen binding protein. This is Globin-3 from Paramphistomum epiclitum.